A 469-amino-acid chain; its full sequence is Uronate isomerase (469 aa).

This sequence belongs to the metallo-dependent hydrolases superfamily. Uronate isomerase family.

The enzyme catalyses D-glucuronate = D-fructuronate. It carries out the reaction aldehydo-D-galacturonate = keto-D-tagaturonate. It functions in the pathway carbohydrate metabolism; pentose and glucuronate interconversion. In Mesorhizobium japonicum (strain LMG 29417 / CECT 9101 / MAFF 303099) (Mesorhizobium loti (strain MAFF 303099)), this protein is Uronate isomerase.